A 305-amino-acid polypeptide reads, in one-letter code: Spermatogenesis-associated protein 4 (305 aa).

The Calponin-homology (CH) domain occupies 49-155 (SRLSRSVLRW…EEVYTLLTHR (107 aa)).

It is found in the nucleus. In terms of biological role, may play a role in apoptosis regulation. The protein is Spermatogenesis-associated protein 4 (SPATA4) of Pan troglodytes (Chimpanzee).